The sequence spans 2645 residues: Non-reducing polyketide synthase AC (2645 aa).

An N-terminal acylcarrier protein transacylase domain (SAT) region spans residues 73-2366; sequence ALQNLNEWLK…TDIVHNAWPM (2294 aa). His260 acts as the Proton donor/acceptor; for transacylase activity in catalysis. The Ketosynthase family 3 (KS3) domain occupies 416-834; sequence DDKIAVIGMA…GSNSSLVVTE (419 aa). Residues Cys583, His718, and His757 each act as for beta-ketoacyl synthase activity in the active site. Residues 943-1252 are malonyl-CoA:ACP transacylase (MAT) domain; it reads CFGGQISTYI…HAVSITTDKS (310 aa). The interval 1324 to 1457 is N-terminal hotdog fold; it reads SKGFTSFAGY…GVCSFCSATD (134 aa). The PKS/mFAS DH domain maps to 1324 to 1637; sequence SKGFTSFAGY…YNKVPLPVMR (314 aa). Residues 1330 to 1641 form a product template (PT) domain region; that stretch reads FAGYIDGNQR…PLPVMRGILG (312 aa). The active-site Proton acceptor; for dehydratase activity is the His1359. The segment at 1487–1637 is C-terminal hotdog fold; that stretch reads NIMQGTANIY…YNKVPLPVMR (151 aa). The Proton donor; for dehydratase activity role is filled by Asp1542. Residues 1684-1696 are compositionally biased toward polar residues; that stretch reads NGTTGTENPQIKS. Residues 1684 to 1716 form a disordered region; it reads NGTTGTENPQIKSKTNKVKKVPTRKSGGSDLET. A compositionally biased stretch (basic residues) spans 1697-1706; that stretch reads KTNKVKKVPT. The Carrier domain occupies 1711–1788; that stretch reads GSDLETPAKT…SLVKYIREIR (78 aa). Ser1748 bears the O-(pantetheine 4'-phosphoryl)serine mark. Over residues 1794–1805 the composition is skewed to acidic residues; the sequence is QNVDDSESESEE. Residues 1794-1816 form a disordered region; it reads QNVDDSESESEELQQQATPIDSA. The active-site For methyltransferase activity is Tyr2009. Residues 2023-2197 are methyltransferase (CMeT) domain; it reads EVFVEKIGSS…SVGYGHVDWT (175 aa). An NADPH-binding (R) domain region spans residues 2269–2573; it reads CVLITGATGS…NIIPFYDWVQ (305 aa).

Its pathway is mycotoxin biosynthesis. Non-reducing polyketide synthase; part of the gene cluster that mediates the biosynthesis of the selective antifungal agent ascochitine, an o-quinone methide that plays a possible protective role against other microbial competitors in nature and is considered to be important for pathogenicity of legume-associated Didymella species. The pathway probably begins with the synthesis of a keto-aldehyde intermediate by the ascochitine non-reducing polyketide synthase pksAC from successive condensations of 4 malonyl-CoA units, presumably with a simple acetyl-CoA starter unit. Release of the keto-aldehyde intermediate is consistent with the presence of the C-terminal reductive release domain. The HR-PKS (orf7) probably makes a diketide starter unit which is passed to the non-reducing polyketide synthase pksAC for further extension, producing ascochital and ascochitine. The aldehyde dehydrogenase (orf1), the 2-oxoglutarate-dependent dioxygenase (orf3) and the dehydrogenase (orf9) are probably involved in subsequent oxidations of methyl groups to the carboxylic acid of the heterocyclic ring. The ascochitine gene cluster also includes a gene encoding a short peptide (orf2) that is often found in secondary metabolite gene clusters and which function has still to be determined. The chain is Non-reducing polyketide synthase AC from Didymella fabae (Leaf and pod spot disease fungus).